Consider the following 82-residue polypeptide: Small ribosomal subunit protein uS17c (82 aa).

Belongs to the universal ribosomal protein uS17 family. Part of the 30S ribosomal subunit.

It localises to the plastid. Its subcellular location is the chloroplast. Functionally, one of the primary rRNA binding proteins, it binds specifically to the 5'-end of 16S ribosomal RNA. The sequence is that of Small ribosomal subunit protein uS17c (rps17) from Cyanidioschyzon merolae (strain NIES-3377 / 10D) (Unicellular red alga).